The chain runs to 207 residues: MFKFIEHTGVVVPLNISNIDTDAIIPKQFLKKVNKIGFGKYLFHDWRFLDKNQLKINPNFILNKSTYKNASILLTRENFGCGSSREHAVWSLLDYGFKVIIASSFSDIFYSNSFNNKLLLIVLENEDIDYLFDLVNTKIGLSFNVSLIHKKITVDNLDIPFQIDDFQRLCLVNNWDNNDLTMKIDHKIKLYEKNIFSFLLKREKFTS.

Belongs to the LeuD family. LeuD type 1 subfamily. As to quaternary structure, heterodimer of LeuC and LeuD.

The catalysed reaction is (2R,3S)-3-isopropylmalate = (2S)-2-isopropylmalate. Its pathway is amino-acid biosynthesis; L-leucine biosynthesis; L-leucine from 3-methyl-2-oxobutanoate: step 2/4. Catalyzes the isomerization between 2-isopropylmalate and 3-isopropylmalate, via the formation of 2-isopropylmaleate. The polypeptide is 3-isopropylmalate dehydratase small subunit (leuD) (Buchnera aphidicola subsp. Schizaphis graminum (strain Sg)).